The chain runs to 89 residues: OMEGA-ectatommitoxin(02)-Rm1b (89 aa).

The signal sequence occupies residues 1 to 30 (MKDSYISIVIAYLMVTFILVSSMPIEGEKG). 3 disulfides stabilise this stretch: C39/C52, C47/C68, and C70/C79. Positions 43–80 (YANYCFNGKCVHFVAQDEPGKPCYSCICDKFYIGKRCG) constitute an EGF-like domain.

The protein belongs to the EGF domain peptide family. As to expression, expressed by the venom gland.

The protein resides in the secreted. Functionally, ant peptide with probable defensive activity which acts as a potent agonist of the mammalian epidermal growth factor receptor (EGFR). Mimics, both structurally and functionally, vertebrate epidermal growth factor (EGF) peptide hormones. In vivo, intraplantar injection in mice causes long-lasting (several days) hypersensitivity of the injected paw to both mechanical and thermal stimuli. Its long-lasting effect is unusual for venom toxins whose effects are usually immediate. One possible explanation is that it would reduce the duration of a nest attack, discourage future attacks, or enhance the actions of subsequent exposure to other pain-inducing venom peptides. This chain is OMEGA-ectatommitoxin(02)-Rm1b, found in Rhytidoponera metallica (Australian green-headed ant).